Here is a 587-residue protein sequence, read N- to C-terminus: Bifunctional lycopene cyclase/phytoene synthase (587 aa).

The lycopene beta-cyclase stretch occupies residues 1–236 (MGLDYILVHV…IVFGLVCIDY (236 aa)). 7 helical membrane passes run 5-25 (YILVHVTYNIPLAGILTLVYW), 35-55 (KISTLVIISLVATIPWDSYLV), 65-85 (NGVIGWTLYDIPSEEVFFFII), 91-111 (SLVYLILTRWLVLPMYLGTVA), 116-136 (LIGASILLLAISVGLIALCFG), 145-165 (IITWAGPFLLIQWVFSSGFII), and 218-238 (LFFLITNIVIVFGLVCIDYAI). Residues 243–587 (CELVQSPQAV…VAYRAMAWRK (345 aa)) are phytoene synthase.

In the N-terminal section; belongs to the lycopene beta-cyclase family. This sequence in the C-terminal section; belongs to the phytoene/squalene synthase family.

It localises to the membrane. The catalysed reaction is all-trans-lycopene = gamma-carotene. The enzyme catalyses gamma-carotene = all-trans-beta-carotene. It catalyses the reaction 2 (2E,6E,10E)-geranylgeranyl diphosphate = 15-cis-phytoene + 2 diphosphate. It functions in the pathway carotenoid biosynthesis; beta-carotene biosynthesis. The protein operates within carotenoid biosynthesis; phytoene biosynthesis; all-trans-phytoene from geranylgeranyl diphosphate: step 1/1. Its function is as follows. Bifunctional enzyme that catalyzes the reactions from geranylgeranyl diphosphate to phytoene (phytoene synthase) and lycopene to beta-carotene via the intermediate gamma-carotene (lycopene cyclase). This Aspergillus oryzae (strain ATCC 42149 / RIB 40) (Yellow koji mold) protein is Bifunctional lycopene cyclase/phytoene synthase.